Reading from the N-terminus, the 1211-residue chain is PH domain-containing protein DDB_G0287875 (1211 aa).

One can recognise a Ras-associating 1 domain in the interval 5-90; the sequence is QKKILKVFDQ…YKFFFLNPNG (86 aa). Polar residues predominate over residues 103 to 112; the sequence is KSQSASTSGS. The interval 103–133 is disordered; the sequence is KSQSASTSGSAPPKKEPPKPQELQQKQHISK. The PH domain maps to 132-223; the sequence is SKGKSGWLLR…WAQELQATMN (92 aa). Calponin-homology (CH) domains follow at residues 277–384 and 392–502; these read TTLV…VGYF and FNMR…LSGQ. 2 disordered regions span residues 520-941 and 973-1110; these read VEPE…TESV and TSAT…PKNT. Residues 527–572 adopt a coiled-coil conformation; sequence SIRDKQLKLMREKKEEEDRLKKEKEEKEKEEKEKLEKESSAAAAAT. Residues 528–565 show a composition bias toward basic and acidic residues; it reads IRDKQLKLMREKKEEEDRLKKEKEEKEKEEKEKLEKES. Low complexity-rich tracts occupy residues 566–596, 607–646, 655–668, and 676–691; these read SAAAAATSSIASTANSNSTEPPKPTTVPLKK, PPTVSSPTTTTTTTVPTTVPTTVTTTTTTTSPTTSPTLTP, KKPATAPLKLKPVA, and PSSSTSTTTTPTTTPS. Basic and acidic residues predominate over residues 703-729; that stretch reads QLEKEKQDRLEKARLEKEKAEKEEQEF. Residues 703–847 adopt a coiled-coil conformation; that stretch reads QLEKEKQDRL…ERKHDENDMD (145 aa). Residues 744-753 are compositionally biased toward low complexity; that stretch reads LLEQQKQQQE. Composition is skewed to basic and acidic residues over residues 754–778 and 786–853; these read GQERLRKEEEEQQQQRELEEKQRQI and EARI…KLLE. Over residues 862 to 877 the composition is skewed to polar residues; the sequence is PTITPPQSLHSSQIIR. Residues 880–909 are a coiled coil; that stretch reads IEEDDQTNSELEMFQNEYNRLQDEEEHINS. 2 stretches are compositionally biased toward low complexity: residues 914 to 936 and 976 to 1010; these read GSSGSNNSNNNNNNNNNKSGASS and TTSDSFNLSTSSTSLSFLPSSPDLSTNSTFTTNNN. A compositionally biased stretch (polar residues) spans 1032-1048; the sequence is TKEQQSIIDKQTGLVSK. The stretch at 1048-1076 forms a coiled coil; it reads KQSTNNESNEQQQQQQQQQQLQQQQSSQN. The segment covering 1049–1083 has biased composition (low complexity); that stretch reads QSTNNESNEQQQQQQQQQQLQQQQSSQNSTTSIST. Over residues 1093 to 1104 the composition is skewed to basic and acidic residues; that stretch reads NEEKEKESEPHK. Residues 1112 to 1196 enclose the Ras-associating 2 domain; sequence GRVVVRICLE…DRFVFKKNDI (85 aa).

The sequence is that of PH domain-containing protein DDB_G0287875 from Dictyostelium discoideum (Social amoeba).